The sequence spans 188 residues: GTP cyclohydrolase 1 (188 aa).

Residues Cys75, His78, and Cys146 each contribute to the Zn(2+) site.

This sequence belongs to the GTP cyclohydrolase I family. As to quaternary structure, toroid-shaped homodecamer, composed of two pentamers of five dimers.

It catalyses the reaction GTP + H2O = 7,8-dihydroneopterin 3'-triphosphate + formate + H(+). The protein operates within cofactor biosynthesis; 7,8-dihydroneopterin triphosphate biosynthesis; 7,8-dihydroneopterin triphosphate from GTP: step 1/1. The protein is GTP cyclohydrolase 1 of Hahella chejuensis (strain KCTC 2396).